The primary structure comprises 211 residues: Uracil phosphoribosyltransferase (211 aa).

5-phospho-alpha-D-ribose 1-diphosphate contacts are provided by residues Arg81, Arg106, and 133–141 (DPMLATGNS). Uracil is bound by residues Ile196 and 201–203 (GDA). Asp202 provides a ligand contact to 5-phospho-alpha-D-ribose 1-diphosphate.

The protein belongs to the UPRTase family. Requires Mg(2+) as cofactor.

The catalysed reaction is UMP + diphosphate = 5-phospho-alpha-D-ribose 1-diphosphate + uracil. The protein operates within pyrimidine metabolism; UMP biosynthesis via salvage pathway; UMP from uracil: step 1/1. Allosterically activated by GTP. Functionally, catalyzes the conversion of uracil and 5-phospho-alpha-D-ribose 1-diphosphate (PRPP) to UMP and diphosphate. This is Uracil phosphoribosyltransferase from Myxococcus xanthus (strain DK1622).